Reading from the N-terminus, the 202-residue chain is Protein GrpE (202 aa).

Residues 21 to 37 are compositionally biased toward basic and acidic residues; the sequence is EELKNEEVKEETHEHEH. Residues 21–52 form a disordered region; it reads EELKNEEVKEETHEHEHKHGGHTCCGKHGHKH. Basic residues predominate over residues 38–51; sequence KHGGHTCCGKHGHK.

It belongs to the GrpE family. Homodimer.

It localises to the cytoplasm. Its function is as follows. Participates actively in the response to hyperosmotic and heat shock by preventing the aggregation of stress-denatured proteins, in association with DnaK and GrpE. It is the nucleotide exchange factor for DnaK and may function as a thermosensor. Unfolded proteins bind initially to DnaJ; upon interaction with the DnaJ-bound protein, DnaK hydrolyzes its bound ATP, resulting in the formation of a stable complex. GrpE releases ADP from DnaK; ATP binding to DnaK triggers the release of the substrate protein, thus completing the reaction cycle. Several rounds of ATP-dependent interactions between DnaJ, DnaK and GrpE are required for fully efficient folding. This Fusobacterium nucleatum subsp. polymorphum (Fusobacterium polymorphum) protein is Protein GrpE.